The sequence spans 337 residues: Tetraacyldisaccharide 4'-kinase (337 aa).

His51–Thr58 contributes to the ATP binding site.

The protein belongs to the LpxK family.

The enzyme catalyses a lipid A disaccharide + ATP = a lipid IVA + ADP + H(+). Its pathway is glycolipid biosynthesis; lipid IV(A) biosynthesis; lipid IV(A) from (3R)-3-hydroxytetradecanoyl-[acyl-carrier-protein] and UDP-N-acetyl-alpha-D-glucosamine: step 6/6. Transfers the gamma-phosphate of ATP to the 4'-position of a tetraacyldisaccharide 1-phosphate intermediate (termed DS-1-P) to form tetraacyldisaccharide 1,4'-bis-phosphate (lipid IVA). The chain is Tetraacyldisaccharide 4'-kinase from Afipia carboxidovorans (strain ATCC 49405 / DSM 1227 / KCTC 32145 / OM5) (Oligotropha carboxidovorans).